The following is a 295-amino-acid chain: Putative xyloglucan endotransglucosylase/hydrolase protein 1 (295 aa).

Positions 1–24 are cleaved as a signal peptide; sequence MNKMEYLSIFGFVSVLYLIIRVDA. The 199-residue stretch at 27–225 folds into the GH16 domain; that stretch reads YEVNGIDQSK…WSLAPFKANF (199 aa). Catalysis depends on Glu-113, which acts as the Nucleophile. Glu-117 (proton donor) is an active-site residue. Xyloglucan-binding positions include Glu-117, 129–131, and 139–141; these read QTN and NRE. N-linked (GlcNAc...) asparagine glycosylation is present at Asn-180. Xyloglucan-binding positions include 204–205 and Gly-209; that span reads NW. Residues Asn-215 and Asn-229 are each glycosylated (N-linked (GlcNAc...) asparagine). Disulfide bonds link Cys-233–Cys-242 and Cys-278–Cys-291. Residue Arg-283 participates in xyloglucan binding.

The protein belongs to the glycosyl hydrolase 16 family. XTH group 1 subfamily. Contains at least one intrachain disulfide bond essential for its enzymatic activity.

The protein localises to the secreted. It is found in the cell wall. The protein resides in the extracellular space. It localises to the apoplast. It catalyses the reaction breaks a beta-(1-&gt;4) bond in the backbone of a xyloglucan and transfers the xyloglucanyl segment on to O-4 of the non-reducing terminal glucose residue of an acceptor, which can be a xyloglucan or an oligosaccharide of xyloglucan.. Functionally, may catalyze xyloglucan endohydrolysis (XEH) and/or endotransglycosylation (XET). Cleaves and religates xyloglucan polymers, an essential constituent of the primary cell wall, and thereby participates in cell wall construction of growing tissues. The protein is Putative xyloglucan endotransglucosylase/hydrolase protein 1 (XTH1) of Arabidopsis thaliana (Mouse-ear cress).